Here is a 311-residue protein sequence, read N- to C-terminus: Acetyl-coenzyme A carboxylase carboxyl transferase subunit alpha (311 aa).

Residues glutamate 34 to glutamate 286 form the CoA carboxyltransferase C-terminal domain.

The protein belongs to the AccA family. As to quaternary structure, acetyl-CoA carboxylase is a heterohexamer composed of biotin carboxyl carrier protein (AccB), biotin carboxylase (AccC) and two subunits each of ACCase subunit alpha (AccA) and ACCase subunit beta (AccD).

Its subcellular location is the cytoplasm. It carries out the reaction N(6)-carboxybiotinyl-L-lysyl-[protein] + acetyl-CoA = N(6)-biotinyl-L-lysyl-[protein] + malonyl-CoA. Its pathway is lipid metabolism; malonyl-CoA biosynthesis; malonyl-CoA from acetyl-CoA: step 1/1. Component of the acetyl coenzyme A carboxylase (ACC) complex. First, biotin carboxylase catalyzes the carboxylation of biotin on its carrier protein (BCCP) and then the CO(2) group is transferred by the carboxyltransferase to acetyl-CoA to form malonyl-CoA. This is Acetyl-coenzyme A carboxylase carboxyl transferase subunit alpha from Nitratiruptor sp. (strain SB155-2).